Reading from the N-terminus, the 121-residue chain is Protein opa (121 aa).

The protein belongs to the opacity porin family.

This Haemophilus influenzae (strain ATCC 51907 / DSM 11121 / KW20 / Rd) protein is Protein opa (opa).